Here is a 77-residue protein sequence, read N- to C-terminus: uncharacterized protein (77 aa).

Over residues 1-10 (MFNNKGRRNV) the composition is skewed to basic residues. Residues 1 to 21 (MFNNKGRRNVRNNEVRRNVPV) form a disordered region. A compositionally biased stretch (basic and acidic residues) spans 11–21 (RNNEVRRNVPV). The TRAM domain occupies 20 to 77 (PVKEGETYTVTIEDMGRGGDGIARVEGFVVFVPETQKGETVNVKITAVKSKFAFAEKI).

This is an uncharacterized protein from Methanocaldococcus jannaschii (strain ATCC 43067 / DSM 2661 / JAL-1 / JCM 10045 / NBRC 100440) (Methanococcus jannaschii).